A 1009-amino-acid chain; its full sequence is Type VII secretion system accessory factor EsaA (1009 aa).

A helical transmembrane segment spans residues 7–27 (IYALIVTLIIIIAIVSMIFFV). A compositionally biased stretch (basic and acidic residues) spans 680-697 (TFAEEPQEPKIDKGKNDE). The segment at 680-707 (TFAEEPQEPKIDKGKNDEFNTMSSNLDK) is disordered. Helical transmembrane passes span 822–842 (ISPT…AYIF), 869–889 (VITS…VGLI), 903–923 (KFIL…TYLL), 928–948 (SIGM…MNNL), and 979–999 (IGLV…LNMF).

The protein belongs to the EsaA family. In terms of assembly, homodimer. Interacts with EssB.

The protein resides in the cell membrane. Its function is as follows. Component of the type VII secretion system (Ess). Provides together with EssB and other components such as EssC and EssE a secretion platform across the cytoplasmic membrane in the host. This Staphylococcus aureus (strain COL) protein is Type VII secretion system accessory factor EsaA.